A 33-amino-acid polypeptide reads, in one-letter code: Putative tumor antigen NA88-A (33 aa).

Expressed in testis and melanoma cell lines.

This Homo sapiens (Human) protein is Putative tumor antigen NA88-A (VENTXP1).